Here is a 373-residue protein sequence, read N- to C-terminus: 3-dehydroquinate synthase (373 aa).

NAD(+)-binding positions include G120–D124, T144–T145, K157, K166, and F184–T187. The Zn(2+) site is built by E199, H262, and H278.

Belongs to the sugar phosphate cyclases superfamily. Dehydroquinate synthase family. NAD(+) serves as cofactor. Co(2+) is required as a cofactor. Requires Zn(2+) as cofactor.

The protein localises to the cytoplasm. It catalyses the reaction 7-phospho-2-dehydro-3-deoxy-D-arabino-heptonate = 3-dehydroquinate + phosphate. It functions in the pathway metabolic intermediate biosynthesis; chorismate biosynthesis; chorismate from D-erythrose 4-phosphate and phosphoenolpyruvate: step 2/7. Its function is as follows. Catalyzes the conversion of 3-deoxy-D-arabino-heptulosonate 7-phosphate (DAHP) to dehydroquinate (DHQ). The sequence is that of 3-dehydroquinate synthase from Clostridium tetani (strain Massachusetts / E88).